A 309-amino-acid chain; its full sequence is Dioxygenase af480 (309 aa).

The Fe cation site is built by His-153, Asp-155, and His-228.

It belongs to the PhyH family. Requires Fe cation as cofactor.

It carries out the reaction 5-dehydro-6-demethoxyfumagillol + 2-oxoglutarate + O2 = 5-dehydro-6-demethoxy-6-hydroxyfumagillol + succinate + CO2. It functions in the pathway secondary metabolite biosynthesis; terpenoid biosynthesis. In terms of biological role, dioxygenase; part of the gene cluster that mediates the biosynthesis of fumagillin, a meroterpenoid that has numerous biological activities including irreversible inhibition of human type 2 methionine aminopeptidase (METAP2). Within the pathway, the dioxygenase af480 acts as a 5-dehydro-6-demethoxyfumagillol dioxygenase that hydroylates 5-keto-demethoxyfumagillol at position C-6. The pathway begins with the conversion of farnesyl pyrophosphate (FPP) to beta-trans-bergamotene by the membrane-bound beta-trans-bergamotene synthase af520. The multifunctional cytochrome P450 monooxygenase af510 then converts beta-trans-bergamotene into 5-keto-demethoxyfumagillol via several oxydation steps. 5-keto-demethoxyfumagillol is then subjected to successive C-6 hydroxylation and O-methylation by the dioxygenase af480 and O-methyltransferase af390-400, respectively, to yield 5-keto-fumagillol, which is then stereoselectively reduced by the keto-reductase af490 to 5R-hydroxy-seco-sesquiterpene. The next step is the polyketide transferase af380-catalyzed transfer of a dodecapentaenoyl group synthesized by the polyketide synthase af370 onto 5R-hydroxy-seco-sesquiterpene which leads to the production of prefumagillin. Finally, oxidative cleavage by the monooxygenase af470 converts prefumagillin to fumagillin. The polypeptide is Dioxygenase af480 (Aspergillus fumigatus (strain ATCC MYA-4609 / CBS 101355 / FGSC A1100 / Af293) (Neosartorya fumigata)).